The chain runs to 227 residues: Thiocyanate methyltransferase 1 (227 aa).

Trp36, Trp40, Trp47, and Gly74 together coordinate S-adenosyl-L-methionine. Residue Ser86 is modified to Phosphoserine. S-adenosyl-L-methionine-binding positions include Asp95, 123-124 (DV), and Tyr139.

It belongs to the class I-like SAM-binding methyltransferase superfamily. TPMT family. As to expression, expressed in shoots, leaves, stems, inflorescences, flowers and green siliques.

It catalyses the reaction thiocyanate + S-adenosyl-L-methionine = methyl thiocyanate + S-adenosyl-L-homocysteine. In terms of biological role, S-adenosyl-L-methionine-dependent methyltransferase. Involved in glucosinolate metabolism and defense against phytopathogens. Highly reactive to thiocyanate (NCS(-)) derived from myrosinase-mediated hydrolysis of glucosinolates upon tissue damage. The polypeptide is Thiocyanate methyltransferase 1 (Arabidopsis thaliana (Mouse-ear cress)).